A 181-amino-acid polypeptide reads, in one-letter code: Lipoprotein signal peptidase (181 aa).

Transmembrane regions (helical) follow at residues 25–45 (LFYK…QVFI), 86–106 (LVYF…VFMV), and 107–127 (KYSY…NFFD). Residues Asp-138 and Asp-153 contribute to the active site. The helical transmembrane segment at 149–169 (FNFADCCITFGFIGLFFCFLI) threads the bilayer.

Belongs to the peptidase A8 family.

Its subcellular location is the cell membrane. It catalyses the reaction Release of signal peptides from bacterial membrane prolipoproteins. Hydrolyzes -Xaa-Yaa-Zaa-|-(S,diacylglyceryl)Cys-, in which Xaa is hydrophobic (preferably Leu), and Yaa (Ala or Ser) and Zaa (Gly or Ala) have small, neutral side chains.. The protein operates within protein modification; lipoprotein biosynthesis (signal peptide cleavage). Its function is as follows. This protein specifically catalyzes the removal of signal peptides from prolipoproteins. This Mycoplasma genitalium (strain ATCC 33530 / DSM 19775 / NCTC 10195 / G37) (Mycoplasmoides genitalium) protein is Lipoprotein signal peptidase.